A 374-amino-acid chain; its full sequence is Coiled-coil domain-containing protein 89 (374 aa).

Residues 1–40 are disordered; sequence MRAPMLQKQQAPRMDTPPPEERLEKQNEKLNNQEEETEFK. At T16 the chain carries Phosphothreonine. Positions 19 to 32 are enriched in basic and acidic residues; sequence PEERLEKQNEKLNN. The stretch at 20–351 forms a coiled coil; it reads EERLEKQNEK…DELRLQSEAF (332 aa).

It belongs to the CCDC89 family. In terms of assembly, interacts with HEY1.

The protein localises to the cytoplasm. Its subcellular location is the nucleus. The sequence is that of Coiled-coil domain-containing protein 89 (CCDC89) from Homo sapiens (Human).